A 195-amino-acid polypeptide reads, in one-letter code: ATP-dependent Clp protease proteolytic subunit (195 aa).

S98 serves as the catalytic Nucleophile. Residue H123 is part of the active site.

This sequence belongs to the peptidase S14 family. In terms of assembly, fourteen ClpP subunits assemble into 2 heptameric rings which stack back to back to give a disk-like structure with a central cavity, resembling the structure of eukaryotic proteasomes.

Its subcellular location is the cytoplasm. The enzyme catalyses Hydrolysis of proteins to small peptides in the presence of ATP and magnesium. alpha-casein is the usual test substrate. In the absence of ATP, only oligopeptides shorter than five residues are hydrolyzed (such as succinyl-Leu-Tyr-|-NHMec, and Leu-Tyr-Leu-|-Tyr-Trp, in which cleavage of the -Tyr-|-Leu- and -Tyr-|-Trp bonds also occurs).. Functionally, cleaves peptides in various proteins in a process that requires ATP hydrolysis. Has a chymotrypsin-like activity. Plays a major role in the degradation of misfolded proteins. In Alkaliphilus oremlandii (strain OhILAs) (Clostridium oremlandii (strain OhILAs)), this protein is ATP-dependent Clp protease proteolytic subunit.